Here is a 491-residue protein sequence, read N- to C-terminus: Transcriptional regulatory protein dep1 (491 aa).

2 disordered regions span residues 1-74 (MTEN…LPSQ) and 155-301 (NSVE…DDEK). Over residues 10-20 (IPHEILPKEPF) the composition is skewed to basic and acidic residues. Composition is skewed to polar residues over residues 54–63 (ALSNPETNAN) and 155–171 (NSVE…TIVS). Positions 175-186 (KESDFESEEKAT) are enriched in basic and acidic residues. The span at 187-196 (NDNNGLIETN) shows a compositional bias: polar residues. Position 204 is a phosphoserine (serine 204). Over residues 205–215 (SEHEEEEDEES) the composition is skewed to acidic residues. 2 stretches are compositionally biased toward basic and acidic residues: residues 216 to 227 (NIERTEDSDHQI) and 282 to 301 (REIA…DDEK). Phosphoserine is present on serine 223.

Component of the RPD3C(L) complex.

It is found in the nucleus. In terms of biological role, component of the RPD3C(L) histone deacetylase complex (HDAC) responsible for the deacetylation of lysine residues on the N-terminal part of the core histones (H2A, H2B, H3 and H4). Histone deacetylation gives a tag for epigenetic repression and plays an important role in transcriptional regulation, cell cycle progression and developmental events. The sequence is that of Transcriptional regulatory protein dep1 (dep1) from Schizosaccharomyces pombe (strain 972 / ATCC 24843) (Fission yeast).